Here is an 889-residue protein sequence, read N- to C-terminus: MAELPQSRINERNITSEMRESFLDYAMSVIVARALPDVRDGLKPVHRRILYGLNEQGMTPDKSYKKSARIVGDVMGKYHPHGDSSIYEAMVRMAQDFSYRYPLVDGQGNFGSMDGDGAAAMRYTEARMTKITLELLRDINKDTIDFIDNYDGNEREPSVLPARFPNLLANGASGIAVGMATNIPPHNLTELINGVLSLSKNPDISIAELMEDIEGPDFPTAGLILGKSGIRRAYETGRGSIQMRSRAVIEERGGGRQRIVVTEIPFQVNKARMIEKIAELVRDKKIDGITDLRDETSLRTGVRVVIDVRKDANASVILNNLYKQTPLQTSFGVNMIALVNGRPKLINLKEALVHYLEHQKTVVRRRTQYNLRKAKDRAHILEGLRIALDHIDEIISTIRESDTDKVAMESLQQRFKLSEKQAQAILDMRLRRLTGLERDKIEAEYNELLNYISELETILADEEVLLQLVRDELTEIRDRFGDDRRTEIQLGGFEDLEDEDLIPEEQIVITLSHNNYIKRLPVSTYRAQNRGGRGVQGMNTLEEDFVSQLVTLSTHDHVLFFTNKGRVYKLKGYEVPELSRQSKGIPVVNAIELENDEVISTMIAVKDLESEDNFLVFATKRGVVKRSALSNFSRINRNGKIAISFREDDELIAVRLTSGQEDILIGTSHASLIRFPESTLRPLGRTATGVKGITLREGDEVVGLDVAHANSVDEVLVVTENGYGKRTPVNDYRLSNRGGKGIKTATITERNGNVVCITTVTGEEDLMIVTNAGVIIRLDVADISQNGRAAQGVRLIRLGDDQFVSTVAKVKEDAEDETNEDEQSTSTVSEDGTEQQREAVVNDETPGNAIHTEVIDSEENDEDGRIEVRQDFMDRVEEDIQQSSDEDEE.

The 467-residue stretch at 35-501 (LPDVRDGLKP…GFEDLEDEDL (467 aa)) folds into the Topo IIA-type catalytic domain. Y123 serves as the catalytic O-(5'-phospho-DNA)-tyrosine intermediate. The GyrA-box motif lies at 528-534 (QNRGGRG). The disordered stretch occupies residues 810–889 (VKEDAEDETN…IQQSSDEDEE (80 aa)). Residues 813–823 (DAEDETNEDEQ) show a composition bias toward acidic residues. Over residues 863 to 875 (DGRIEVRQDFMDR) the composition is skewed to basic and acidic residues. The segment covering 876–889 (VEEDIQQSSDEDEE) has biased composition (acidic residues).

The protein belongs to the type II topoisomerase GyrA/ParC subunit family. Heterotetramer, composed of two GyrA and two GyrB chains. In the heterotetramer, GyrA contains the active site tyrosine that forms a transient covalent intermediate with DNA, while GyrB binds cofactors and catalyzes ATP hydrolysis.

The protein localises to the cytoplasm. It catalyses the reaction ATP-dependent breakage, passage and rejoining of double-stranded DNA.. In terms of biological role, a type II topoisomerase that negatively supercoils closed circular double-stranded (ds) DNA in an ATP-dependent manner to modulate DNA topology and maintain chromosomes in an underwound state. Negative supercoiling favors strand separation, and DNA replication, transcription, recombination and repair, all of which involve strand separation. Also able to catalyze the interconversion of other topological isomers of dsDNA rings, including catenanes and knotted rings. Type II topoisomerases break and join 2 DNA strands simultaneously in an ATP-dependent manner. This Staphylococcus aureus (strain N315) protein is DNA gyrase subunit A.